Here is a 55-residue protein sequence, read N- to C-terminus: Variant surface glycoprotein ETAT 1.2 (55 aa).

Asparagine 34 is a glycosylation site (N-linked (GlcNAc...) asparagine). Asparagine 38 is lipidated: GPI-anchor amidated asparagine. A propeptide spans 39 to 55 (removed in mature form); the sequence is NSFAIKTSTLLLAVLLF.

Its subcellular location is the cell membrane. VSG forms a coat on the surface of the parasite. The trypanosome evades the immune response of the host by expressing a series of antigenically distinct VSGs from an estimated 1000 VSG genes. This Trypanosoma brucei rhodesiense protein is Variant surface glycoprotein ETAT 1.2.